Consider the following 396-residue polypeptide: L-lactate dehydrogenase (396 aa).

Positions 1 to 380 constitute an FMN hydroxy acid dehydrogenase domain; it reads MIISAASDYR…SQDSLVQELD (380 aa). Substrate is bound at residue Y24. FMN-binding residues include S106 and Q127. A substrate-binding site is contributed by Y129. Residue T155 coordinates FMN. A substrate-binding site is contributed by R164. K251 contributes to the FMN binding site. H275 acts as the Proton acceptor in catalysis. R278 lines the substrate pocket. 306–330 contacts FMN; the sequence is DSGIRNGLDVVRMIALGADTVLLGR.

This sequence belongs to the FMN-dependent alpha-hydroxy acid dehydrogenase family. The cofactor is FMN.

It localises to the cell inner membrane. The enzyme catalyses (S)-lactate + A = pyruvate + AH2. Catalyzes the conversion of L-lactate to pyruvate. Is coupled to the respiratory chain. This chain is L-lactate dehydrogenase, found in Escherichia fergusonii (strain ATCC 35469 / DSM 13698 / CCUG 18766 / IAM 14443 / JCM 21226 / LMG 7866 / NBRC 102419 / NCTC 12128 / CDC 0568-73).